Here is a 171-residue protein sequence, read N- to C-terminus: MATGAGAGAATVVSAFTGLKSTAQFPSSFKMSNAAAEWEQKTTSNGGRVRCMQVWPPFGNPKFETLSYLPTLTEEQLVKEVEYLLRNKWVPCLEFDLEGSISRKYNRSPGYYDGRYWVMWKLPMFGCTEASQVINEVRECAKAYPKAFIRVIGFDNVRQVQCISFIVHKPE.

The transit peptide at 1–50 (MATGAGAGAATVVSAFTGLKSTAQFPSSFKMSNAAAEWEQKTTSNGGRVR) directs the protein to the chloroplast.

This sequence belongs to the RuBisCO small chain family. As to quaternary structure, heterohexadecamer of 8 large and 8 small subunits.

The protein localises to the plastid. The protein resides in the chloroplast. Functionally, ruBisCO catalyzes two reactions: the carboxylation of D-ribulose 1,5-bisphosphate, the primary event in carbon dioxide fixation, as well as the oxidative fragmentation of the pentose substrate. Both reactions occur simultaneously and in competition at the same active site. Although the small subunit is not catalytic it is essential for maximal activity. This is Ribulose bisphosphate carboxylase small subunit, chloroplastic from Pinus thunbergii (Japanese black pine).